A 577-amino-acid chain; its full sequence is Zona pellucida sperm-binding protein 3 receptor (577 aa).

The N-terminal stretch at 1 to 32 (MTAWSLHELWKTSHSTLFQVTLATVLMAPVLG) is a signal peptide. Sushi domains lie at 33–92 (DCGP…FCAR), 93–154 (KRCK…ECVI), 155–219 (ATCE…ACEK), 220–279 (IVCH…TCEP), 280–346 (NGCI…GCER), and 347–412 (VCCP…SCEA). 12 disulfides stabilise this stretch: C34/C78, C64/C90, C95/C136, C122/C152, C157/C200, C186/C217, C222/C264, C250/C277, C282/C332, C316/C344, C349/C397, and C382/C410. N-linked (GlcNAc...) asparagine glycosylation is found at N72 and N81. N-linked (GlcNAc...) asparagine glycans are attached at residues N144, N195, and N204. N-linked (GlcNAc...) asparagine glycosylation occurs at N335. N426, N431, N434, N443, N462, N475, and N497 each carry an N-linked (GlcNAc...) asparagine glycan. Residues 451–509 (AVCPKPEIINGNLSVEKEIYAEMENITIQCDSGYDLVGSSNIICLENRTWYPDIPFCIM) form the Sushi 7 domain. 2 disulfides stabilise this stretch: C453–C494 and C480–C507.

In terms of assembly, homomultimer; disulfide-linked. In terms of processing, glycosylated. Testis specific.

It localises to the cytoplasmic vesicle. The protein localises to the secretory vesicle. Its subcellular location is the acrosome lumen. Functionally, binds to ZP3 glycoprotein in egg zona pellucida. Probably involved in interactions between sperm acrosome and egg zona pellucida during and immediately following the acrosome reaction. The chain is Zona pellucida sperm-binding protein 3 receptor (Zp3r) from Rattus norvegicus (Rat).